The chain runs to 68 residues: DNA-directed RNA polymerase subunit omega (68 aa).

It belongs to the RNA polymerase subunit omega family. The RNAP catalytic core consists of 2 alpha, 1 beta, 1 beta' and 1 omega subunit. When a sigma factor is associated with the core the holoenzyme is formed, which can initiate transcription.

It carries out the reaction RNA(n) + a ribonucleoside 5'-triphosphate = RNA(n+1) + diphosphate. Its function is as follows. Promotes RNA polymerase assembly. Latches the N- and C-terminal regions of the beta' subunit thereby facilitating its interaction with the beta and alpha subunits. This Dechloromonas aromatica (strain RCB) protein is DNA-directed RNA polymerase subunit omega.